The chain runs to 378 residues: Dual-specificity RNA methyltransferase RlmN (378 aa).

The active-site Proton acceptor is glutamate 96. Positions 102–340 (DNGRGTLCVS…ATVRTTRGDD (239 aa)) constitute a Radical SAM core domain. A disulfide bridge connects residues cysteine 109 and cysteine 345. Positions 116, 120, and 123 each coordinate [4Fe-4S] cluster. Residues 170–171 (GE), serine 202, 224–226 (SLH), and asparagine 302 each bind S-adenosyl-L-methionine. Cysteine 345 (S-methylcysteine intermediate) is an active-site residue.

The protein belongs to the radical SAM superfamily. RlmN family. It depends on [4Fe-4S] cluster as a cofactor.

The protein localises to the cytoplasm. It catalyses the reaction adenosine(2503) in 23S rRNA + 2 reduced [2Fe-2S]-[ferredoxin] + 2 S-adenosyl-L-methionine = 2-methyladenosine(2503) in 23S rRNA + 5'-deoxyadenosine + L-methionine + 2 oxidized [2Fe-2S]-[ferredoxin] + S-adenosyl-L-homocysteine. The catalysed reaction is adenosine(37) in tRNA + 2 reduced [2Fe-2S]-[ferredoxin] + 2 S-adenosyl-L-methionine = 2-methyladenosine(37) in tRNA + 5'-deoxyadenosine + L-methionine + 2 oxidized [2Fe-2S]-[ferredoxin] + S-adenosyl-L-homocysteine. Its function is as follows. Specifically methylates position 2 of adenine 2503 in 23S rRNA and position 2 of adenine 37 in tRNAs. m2A2503 modification seems to play a crucial role in the proofreading step occurring at the peptidyl transferase center and thus would serve to optimize ribosomal fidelity. The polypeptide is Dual-specificity RNA methyltransferase RlmN (Hahella chejuensis (strain KCTC 2396)).